A 131-amino-acid polypeptide reads, in one-letter code: UPF0102 protein H16_A3579 (131 aa).

The protein belongs to the UPF0102 family.

This Cupriavidus necator (strain ATCC 17699 / DSM 428 / KCTC 22496 / NCIMB 10442 / H16 / Stanier 337) (Ralstonia eutropha) protein is UPF0102 protein H16_A3579.